Here is a 381-residue protein sequence, read N- to C-terminus: Succinyl-diaminopimelate desuccinylase (381 aa).

His69 lines the Zn(2+) pocket. Asp71 is a catalytic residue. Asp103 is a binding site for Zn(2+). Residue Glu137 is the Proton acceptor of the active site. Residues Glu138, Glu166, and His355 each coordinate Zn(2+).

This sequence belongs to the peptidase M20A family. DapE subfamily. Homodimer. Zn(2+) serves as cofactor. It depends on Co(2+) as a cofactor.

It catalyses the reaction N-succinyl-(2S,6S)-2,6-diaminopimelate + H2O = (2S,6S)-2,6-diaminopimelate + succinate. It functions in the pathway amino-acid biosynthesis; L-lysine biosynthesis via DAP pathway; LL-2,6-diaminopimelate from (S)-tetrahydrodipicolinate (succinylase route): step 3/3. Its function is as follows. Catalyzes the hydrolysis of N-succinyl-L,L-diaminopimelic acid (SDAP), forming succinate and LL-2,6-diaminopimelate (DAP), an intermediate involved in the bacterial biosynthesis of lysine and meso-diaminopimelic acid, an essential component of bacterial cell walls. The protein is Succinyl-diaminopimelate desuccinylase of Rickettsia africae (strain ESF-5).